The primary structure comprises 751 residues: Polyadenylate-binding protein, cytoplasmic and nuclear (751 aa).

2 stretches are compositionally biased toward polar residues: residues 1 to 26 (MSAEVSTTPAADNTVNGTPEATNPAA) and 36 to 50 (ESASPSATPSANQPH). The interval 1–50 (MSAEVSTTPAADNTVNGTPEATNPAATSAPEVTAVESASPSATPSANQPH) is disordered. 4 RRM domains span residues 52–130 (ASLY…WSQR), 140–217 (GNVF…HHIS), 233–310 (TNVY…RAQK), and 336–458 (VNLY…LAQR). Disordered regions lie at residues 371-413 (TVTA…KKTE) and 601-643 (GQGM…REEV). The segment covering 379-413 (ESEKEKESNKENEKEGEEKTEEKPKESEEEAKKTE) has biased composition (basic and acidic residues). The segment covering 603 to 629 (GMRGPGYGQGRGGAPVQGGPRPQGGRG) has biased composition (gly residues). One can recognise a PABC domain in the interval 646–723 (TGGLTAQTLN…ALSVYDEYMK (78 aa)). Residues 725 to 751 (KGEGEAPAEPAKPKEDAAETATEENKS) are disordered. Positions 735 to 751 (AKPKEDAAETATEENKS) are enriched in basic and acidic residues.

Belongs to the polyadenylate-binding protein type-1 family.

The protein resides in the cytoplasm. Its subcellular location is the nucleus. In terms of biological role, binds the poly(A) tail of mRNA. Appears to be an important mediator of the multiple roles of the poly(A) tail in mRNA biogenesis, stability and translation. In the nucleus, involved in both mRNA cleavage and polyadenylation. Is also required for efficient mRNA export to the cytoplasm. Acts in concert with a poly(A)-specific nuclease (PAN) to affect poly(A) tail shortening, which may occur concomitantly with either nucleocytoplasmic mRNA transport or translational initiation. In the cytoplasm, stimulates translation initiation and regulates mRNA decay through translation termination-coupled poly(A) shortening, probably mediated by PAN. This is Polyadenylate-binding protein, cytoplasmic and nuclear (pab1) from Neosartorya fischeri (strain ATCC 1020 / DSM 3700 / CBS 544.65 / FGSC A1164 / JCM 1740 / NRRL 181 / WB 181) (Aspergillus fischerianus).